Consider the following 256-residue polypeptide: Acetyl-coenzyme A carboxylase carboxyl transferase subunit alpha (256 aa).

The 236-residue stretch at 1 to 236 folds into the CoA carboxyltransferase C-terminal domain; that stretch reads MTDVSRVLKE…KANLIEQITS (236 aa).

Belongs to the AccA family. Acetyl-CoA carboxylase is a heterohexamer composed of biotin carboxyl carrier protein (AccB), biotin carboxylase (AccC) and two subunits each of ACCase subunit alpha (AccA) and ACCase subunit beta (AccD).

The protein localises to the cytoplasm. It carries out the reaction N(6)-carboxybiotinyl-L-lysyl-[protein] + acetyl-CoA = N(6)-biotinyl-L-lysyl-[protein] + malonyl-CoA. It functions in the pathway lipid metabolism; malonyl-CoA biosynthesis; malonyl-CoA from acetyl-CoA: step 1/1. Its function is as follows. Component of the acetyl coenzyme A carboxylase (ACC) complex. First, biotin carboxylase catalyzes the carboxylation of biotin on its carrier protein (BCCP) and then the CO(2) group is transferred by the carboxyltransferase to acetyl-CoA to form malonyl-CoA. This Streptococcus pyogenes serotype M2 (strain MGAS10270) protein is Acetyl-coenzyme A carboxylase carboxyl transferase subunit alpha.